The sequence spans 545 residues: MTTNYIFVTGGVVSSLGKGIAAASLAAILEARGLNVTIMKLDPYINVDPGTMSPTQHGEVFVTEDGAETDLDLGHYERFIRTKMSRRNNFTTGRIYSDVLRKERRGDYLGATIQVIPHITNAIKERIIEGGEGHDVVLVEIGGTVGDIESLPFLEAIRQMAVQVGREHTLFMHLTLVPYLAAAGEVKTKPTQHSVKELLSIGIQPDVLICRSDRTVPANERAKIALFCNVPEKAVISLKDIDSIYKIPALLKSQGLDDYICKRFSLNCPEANLSEWEQVVYEEANPGGEVTIGMVGKYVALPDAYKSVIEALKHGGLKNRLTVNIKLIDSQDVETRGVEVLKDLDAILIPGGFGYRGVEGKIMSANYARENNIPYLGICLGMQVALMEFARNVAGMEGANSTEFVPDCKYPVVALITEWRDENGDVEVRDEASDLGGTMRVGGQQCHLTEGSLVRQMYGEQTIIERHRHRYEVNNMLLKQIEAAGLRVAGLSADRKLVEIVELPDHPWFVACQFHPEFTSTPRDGHPLFAGFVKAAGAYQKRQVK.

Positions Met1–Leu266 are amidoligase domain. Residue Ser14 participates in CTP binding. Ser14 provides a ligand contact to UTP. ATP contacts are provided by residues Ser15 to Ile20 and Asp72. Residues Asp72 and Glu140 each contribute to the Mg(2+) site. Residues Asp147–Glu149, Lys187–Gln192, and Lys223 each bind CTP. UTP is bound by residues Lys187–Gln192 and Lys223. An ATP-binding site is contributed by Lys239–Ile241. Residues Thr291–Arg542 form the Glutamine amidotransferase type-1 domain. Gly352 is a binding site for L-glutamine. Residue Cys379 is the Nucleophile; for glutamine hydrolysis of the active site. Residues Leu380–Gln383, Glu403, and Arg470 contribute to the L-glutamine site. Residues His515 and Glu517 contribute to the active site.

It belongs to the CTP synthase family. As to quaternary structure, homotetramer.

It carries out the reaction UTP + L-glutamine + ATP + H2O = CTP + L-glutamate + ADP + phosphate + 2 H(+). The enzyme catalyses L-glutamine + H2O = L-glutamate + NH4(+). It catalyses the reaction UTP + NH4(+) + ATP = CTP + ADP + phosphate + 2 H(+). It participates in pyrimidine metabolism; CTP biosynthesis via de novo pathway; CTP from UDP: step 2/2. With respect to regulation, allosterically activated by GTP, when glutamine is the substrate; GTP has no effect on the reaction when ammonia is the substrate. The allosteric effector GTP functions by stabilizing the protein conformation that binds the tetrahedral intermediate(s) formed during glutamine hydrolysis. Inhibited by the product CTP, via allosteric rather than competitive inhibition. Catalyzes the ATP-dependent amination of UTP to CTP with either L-glutamine or ammonia as the source of nitrogen. Regulates intracellular CTP levels through interactions with the four ribonucleotide triphosphates. The protein is CTP synthase of Pectobacterium atrosepticum (strain SCRI 1043 / ATCC BAA-672) (Erwinia carotovora subsp. atroseptica).